The chain runs to 490 residues: Hydroxysteroid dehydrogenase-like protein 2 (490 aa).

Residues 17–23 (GASRGIG), K42, and D74 contribute to the NADP(+) site. Residue K42 is modified to N6-(2-hydroxyisobutyryl)lysine. At K116 the chain carries N6-acetyllysine. Y168 functions as the Proton acceptor in the catalytic mechanism. K172 serves as a coordination point for NADP(+). Basic and acidic residues predominate over residues 282-301 (MEEKESNDSVPEVKEEKLQL). The segment at 282-370 (MEEKESNDSV…PRQQPQPFVQ (89 aa)) is disordered. A compositionally biased stretch (low complexity) spans 302–367 (QEESQLQKQP…QPRPRQQPQP (66 aa)). The SCP2 domain occupies 380 to 487 (GAVEETFRIV…KLEKLMTQMN (108 aa)). An N6-succinyllysine modification is found at K390.

This sequence belongs to the short-chain dehydrogenases/reductases (SDR) family. In terms of tissue distribution, widely expressed.

Its subcellular location is the peroxisome. It localises to the mitochondrion. Its function is as follows. Has apparently no steroid dehydrogenase activity. Controls bile acid (BA) and lipid metabolism in response to nutritional cues. This is Hydroxysteroid dehydrogenase-like protein 2 (Hsdl2) from Mus musculus (Mouse).